Consider the following 137-residue polypeptide: NADH dehydrogenase [ubiquinone] 1 beta subcomplex subunit 7 (137 aa).

The N-myristoyl glycine moiety is linked to residue glycine 2. Positions arginine 56–arginine 98 constitute a CHCH domain. The Cx9C motif 1 signature appears at cysteine 59–cysteine 69. 2 disulfides stabilise this stretch: cysteine 59–cysteine 90 and cysteine 69–cysteine 80. The residue at position 73 (serine 73) is a Phosphoserine. The Cx9C motif 2 signature appears at cysteine 80–cysteine 90.

This sequence belongs to the complex I NDUFB7 subunit family. Complex I is composed of 45 different subunits.

Its subcellular location is the mitochondrion inner membrane. The protein localises to the mitochondrion intermembrane space. Its function is as follows. Accessory subunit of the mitochondrial membrane respiratory chain NADH dehydrogenase (Complex I), that is believed not to be involved in catalysis. Complex I functions in the transfer of electrons from NADH to the respiratory chain. The immediate electron acceptor for the enzyme is believed to be ubiquinone. The sequence is that of NADH dehydrogenase [ubiquinone] 1 beta subcomplex subunit 7 (Ndufb7) from Mus musculus (Mouse).